A 279-amino-acid polypeptide reads, in one-letter code: 4-diphosphocytidyl-2-C-methyl-D-erythritol kinase (279 aa).

The active site involves K11. 95–105 contributes to the ATP binding site; the sequence is PVAAGLGGGSS. The active site involves D137.

The protein belongs to the GHMP kinase family. IspE subfamily.

It catalyses the reaction 4-CDP-2-C-methyl-D-erythritol + ATP = 4-CDP-2-C-methyl-D-erythritol 2-phosphate + ADP + H(+). It participates in isoprenoid biosynthesis; isopentenyl diphosphate biosynthesis via DXP pathway; isopentenyl diphosphate from 1-deoxy-D-xylulose 5-phosphate: step 3/6. In terms of biological role, catalyzes the phosphorylation of the position 2 hydroxy group of 4-diphosphocytidyl-2C-methyl-D-erythritol. The polypeptide is 4-diphosphocytidyl-2-C-methyl-D-erythritol kinase (Geotalea daltonii (strain DSM 22248 / JCM 15807 / FRC-32) (Geobacter daltonii)).